The following is a 104-amino-acid chain: MAGKVHRLSGEEREQLLPNLRAVGWHELDGRDAICKEFHFKDFNRAFGFMTRVALQAEKLDHHPEWFNVYDKVHITLSTHDCGGLSERDINLASFIEQIAASLS.

A2 bears the N-acetylalanine mark. Substrate is bound by residues 61 to 63 and 78 to 81; these read DHH and STHD.

The protein belongs to the pterin-4-alpha-carbinolamine dehydratase family. Homotetramer and homodimer.

It localises to the cytoplasm. It is found in the nucleus. It carries out the reaction (4aS,6R)-4a-hydroxy-L-erythro-5,6,7,8-tetrahydrobiopterin = (6R)-L-erythro-6,7-dihydrobiopterin + H2O. Functionally, involved in tetrahydrobiopterin biosynthesis. Seems to both prevent the formation of 7-pterins and accelerate the formation of quinonoid-BH2. Coactivator for HNF1A-dependent transcription. Regulates the dimerization of homeodomain protein HNF1A and enhances its transcriptional activity. Also acts as a coactivator for HNF1B-dependent transcription. This is Pterin-4-alpha-carbinolamine dehydratase (pcbd) from Xenopus laevis (African clawed frog).